Here is a 254-residue protein sequence, read N- to C-terminus: Glc operon transcriptional activator (254 aa).

The HTH gntR-type domain maps to 6 to 74 (RPICEVVAES…QGRDSRVARL (69 aa)). The H-T-H motif DNA-binding region spans 34 to 53 (ERRLCEKLGFSRSALREGLT).

Transcriptional activator of the glcDEFGB operon which is associated with glycolate utilization, and encodes malate synthase G and the genes needed for glycolate oxidase activity. Also negatively regulates the transcription of its own gene. Glycolate acts as an effector, but GlcC can also use acetate as an alternative effector. The chain is Glc operon transcriptional activator (glcC) from Escherichia coli O6:H1 (strain CFT073 / ATCC 700928 / UPEC).